The sequence spans 89 residues: UPF0367 protein CYB_2632 (89 aa).

A disordered region spans residues 69–89 (SKSGSASPMGTRPGFLAQLQS).

Belongs to the UPF0367 family.

The sequence is that of UPF0367 protein CYB_2632 from Synechococcus sp. (strain JA-2-3B'a(2-13)) (Cyanobacteria bacterium Yellowstone B-Prime).